We begin with the raw amino-acid sequence, 161 residues long: NADH-quinone oxidoreductase subunit I (161 aa).

4Fe-4S ferredoxin-type domains lie at 52 to 82 (LRRY…IESS) and 92 to 121 (TRYD…QGPN). The [4Fe-4S] cluster site is built by Cys62, Cys65, Cys68, Cys72, Cys101, Cys104, Cys107, and Cys111.

The protein belongs to the complex I 23 kDa subunit family. As to quaternary structure, NDH-1 is composed of 14 different subunits. Subunits NuoA, H, J, K, L, M, N constitute the membrane sector of the complex. It depends on [4Fe-4S] cluster as a cofactor.

The protein resides in the cell inner membrane. It carries out the reaction a quinone + NADH + 5 H(+)(in) = a quinol + NAD(+) + 4 H(+)(out). Functionally, NDH-1 shuttles electrons from NADH, via FMN and iron-sulfur (Fe-S) centers, to quinones in the respiratory chain. The immediate electron acceptor for the enzyme in this species is believed to be ubiquinone. Couples the redox reaction to proton translocation (for every two electrons transferred, four hydrogen ions are translocated across the cytoplasmic membrane), and thus conserves the redox energy in a proton gradient. This chain is NADH-quinone oxidoreductase subunit I, found in Pelagibacter ubique (strain HTCC1062).